The chain runs to 168 residues: G/U mismatch-specific DNA glycosylase (168 aa).

It belongs to the uracil-DNA glycosylase (UDG) superfamily. TDG/mug family. In terms of assembly, binds DNA as a monomer.

The protein resides in the cytoplasm. The enzyme catalyses Specifically hydrolyzes mismatched double-stranded DNA and polynucleotides, releasing free uracil.. Its function is as follows. Excises ethenocytosine and uracil, which can arise by alkylation or deamination of cytosine, respectively, from the corresponding mispairs with guanine in ds-DNA. It is capable of hydrolyzing the carbon-nitrogen bond between the sugar-phosphate backbone of the DNA and the mispaired base. The complementary strand guanine functions in substrate recognition. Required for DNA damage lesion repair in stationary-phase cells. The polypeptide is G/U mismatch-specific DNA glycosylase (Salmonella gallinarum (strain 287/91 / NCTC 13346)).